Reading from the N-terminus, the 298-residue chain is Homoserine kinase (298 aa).

79-89 (PIARGLGSSGA) serves as a coordination point for ATP.

Belongs to the GHMP kinase family. Homoserine kinase subfamily.

Its subcellular location is the cytoplasm. It carries out the reaction L-homoserine + ATP = O-phospho-L-homoserine + ADP + H(+). Its pathway is amino-acid biosynthesis; L-threonine biosynthesis; L-threonine from L-aspartate: step 4/5. In terms of biological role, catalyzes the ATP-dependent phosphorylation of L-homoserine to L-homoserine phosphate. The sequence is that of Homoserine kinase from Pyrobaculum islandicum (strain DSM 4184 / JCM 9189 / GEO3).